Here is a 561-residue protein sequence, read N- to C-terminus: Liver carboxylesterase 1F (561 aa).

The N-terminal stretch at 1–18 (MCLSFLFLVSLATCVVYG) is a signal peptide. Asn79 is a glycosylation site (N-linked (GlcNAc...) asparagine). Cys87 and Cys116 are joined by a disulfide. Ser221 functions as the Acyl-ester intermediate in the catalytic mechanism. Cysteines 273 and 284 form a disulfide. Catalysis depends on charge relay system residues Glu353 and His466. A Prevents secretion from ER motif is present at residues 558–561 (HNEL).

The protein belongs to the type-B carboxylesterase/lipase family. Expressed in liver and kidney.

Its subcellular location is the lipid droplet. The protein localises to the cytoplasm. It localises to the cytosol. The protein resides in the endoplasmic reticulum. It is found in the microsome. It carries out the reaction a carboxylic ester + H2O = an alcohol + a carboxylate + H(+). It catalyses the reaction all-trans-retinyl hexadecanoate + H2O = all-trans-retinol + hexadecanoate + H(+). Involved in the detoxification of xenobiotics and in the activation of ester and amide prodrugs. Hydrolyzes retinyl esters. Hydrolyzes p-nitrophenyl butyrate (PNPB), triacylglycerol and monoacylglycerol. Shows higher activity against PNPB, a short-chain fatty acid ester, than against triolein, a long-chain fatty acid ester. Shows no detectable activity against diacylglycerol, cholesterol ester or phospholipids. May play a role in adipocyte lipolysis. The polypeptide is Liver carboxylesterase 1F (Rattus norvegicus (Rat)).